A 147-amino-acid polypeptide reads, in one-letter code: uncharacterized protein (147 aa).

A helical membrane pass occupies residues 71–91 (IDILAFVAGTVGVGSLVLLQF).

It is found in the virion. The protein resides in the host membrane. This is an uncharacterized protein from Acanthamoeba polyphaga mimivirus (APMV).